The sequence spans 507 residues: BPI fold-containing family C protein (507 aa).

A signal peptide spans 1–23; it reads MCTKTIPVLWGCFLLWNLYVSSS. Residues Asn79, Asn92, and Asn113 are each glycosylated (N-linked (GlcNAc...) asparagine). The cysteines at positions 161 and 200 are disulfide-linked. Asn213, Asn225, Asn257, Asn301, Asn355, Asn372, and Asn415 each carry an N-linked (GlcNAc...) asparagine glycan.

The protein belongs to the BPI/LBP/Plunc superfamily. BPI/LBP family. In terms of tissue distribution, detected in the basal layer of the epidermis from inflammatory skin from psoriasis patients, but not in normal skin.

The protein resides in the secreted. The protein is BPI fold-containing family C protein (BPIFC) of Homo sapiens (Human).